Here is a 500-residue protein sequence, read N- to C-terminus: MSEKFILSIDQGTTSSRAILFNHKGEIVESAQKEFEQFFPKPGWVEHDANEIWTSVLACIADVLRKADIEANQIEGIGITNQRETTVVWDKNTGRPIYKAIVWQSRQTEGICKELKEQGHEDTIRHKTGLLIDPYFSGTKVKWILDNVDGAREKAEAGELSFGTIDSWLIYRLSGGKTHVTDYSNASRTLMFNIYDLKWDDELLEILDVPKSMLPEVKPSSEVYANTVSYHFFGEEVPIAGVAGDQQAALFGQACFDQGMAKNTYGTGCFLLMNTGEEPVRSKHGLLTTIAWGVDGKVEYALEGSIFVAGSAIQWLRDGLRLIESSPQSEALASQVETTDGVYLVPAFVGLGTPYWDSDARGAVFGLTRGTTKEHFVRATLESLAYQTKDVMDAMLADSDIDLKKLRVDGGAVKNNLLMQFQSDILGVTVERPVVQETTALGSAYLAGLAVGFWKDKEEIAKQWLNEKTFENEMSEEESSYLYKGWQKAVEATRSFKFES.

Thr13 lines the ADP pocket. Positions 13, 14, and 15 each coordinate ATP. Thr13 provides a ligand contact to sn-glycerol 3-phosphate. Position 17 (Arg17) interacts with ADP. The sn-glycerol 3-phosphate site is built by Arg83, Glu84, and Tyr135. Glycerol is bound by residues Arg83, Glu84, and Tyr135. A Phosphohistidine; by HPr modification is found at His231. Position 245 (Asp245) interacts with sn-glycerol 3-phosphate. The glycerol site is built by Asp245 and Gln246. The ADP site is built by Thr267 and Gly310. Residues Thr267, Gly310, Gln314, and Gly411 each contribute to the ATP site. Residues Gly411 and Asn415 each contribute to the ADP site.

This sequence belongs to the FGGY kinase family. As to quaternary structure, homotetramer and homodimer (in equilibrium). In terms of processing, the phosphoenolpyruvate-dependent sugar phosphotransferase system (PTS), including enzyme I, and histidine-containing protein (HPr) are required for the phosphorylation, which leads to the activation of the enzyme.

The enzyme catalyses glycerol + ATP = sn-glycerol 3-phosphate + ADP + H(+). It functions in the pathway polyol metabolism; glycerol degradation via glycerol kinase pathway; sn-glycerol 3-phosphate from glycerol: step 1/1. Its activity is regulated as follows. Activated by phosphorylation and inhibited by fructose 1,6-bisphosphate (FBP). In terms of biological role, key enzyme in the regulation of glycerol uptake and metabolism. Catalyzes the phosphorylation of glycerol to yield sn-glycerol 3-phosphate. The polypeptide is Glycerol kinase (Oceanobacillus iheyensis (strain DSM 14371 / CIP 107618 / JCM 11309 / KCTC 3954 / HTE831)).